The chain runs to 162 residues: Large ribosomal subunit protein bL17 (162 aa).

The segment at 118–162 (RAPAAAPEAEEKGEKKAAGKAEKAPKAAKAPKAEKKPAKKAAKAE) is disordered. Basic and acidic residues predominate over residues 126 to 162 (AEEKGEKKAAGKAEKAPKAAKAPKAEKKPAKKAAKAE).

Belongs to the bacterial ribosomal protein bL17 family. Part of the 50S ribosomal subunit. Contacts protein L32.

This Anaeromyxobacter dehalogenans (strain 2CP-C) protein is Large ribosomal subunit protein bL17.